Here is a 491-residue protein sequence, read N- to C-terminus: Fibrinogen beta chain (491 aa).

An N-terminal signal peptide occupies residues 1-30 (MKRMVSWSFHKLKTMKHLLLLLLCVFLVKS). Glutamine 31 bears the Pyrrolidone carboxylic acid mark. A disordered region spans residues 44-75 (RGHRPLDKKREEAPSLRPAPPPISGGGYRARP). The segment at 45 to 47 (GHR) is beta-chain polymerization, binding distal domain of another fibrin. Residues 47 to 57 (RPLDKKREEAP) are compositionally biased toward basic and acidic residues. Positions 157–222 (KRQKQVKDNE…ESDVSAQMEY (66 aa)) form a coiled coil. Cystine bridges form between cysteine 231/cysteine 316 and cysteine 241/cysteine 270. Residues 232–488 (NIPVVSGKEC…KMSMKIRPFF (257 aa)) form the Fibrinogen C-terminal domain. Asparagine 394 carries N-linked (GlcNAc...) asparagine glycosylation. Residues cysteine 424 and cysteine 437 are joined by a disulfide bond.

As to quaternary structure, heterohexamer; disulfide linked. Contains 2 sets of 3 non-identical chains (alpha, beta and gamma). The 2 heterotrimers are in head to head conformation with the N-termini in a small central domain. In terms of processing, conversion of fibrinogen to fibrin is triggered by thrombin, which cleaves fibrinopeptides A and B from alpha and beta chains, and thus exposes the N-terminal polymerization sites responsible for the formation of the soft clot. The soft clot is converted into the hard clot by factor XIIIA which catalyzes the epsilon-(gamma-glutamyl)lysine cross-linking between gamma chains (stronger) and between alpha chains (weaker) of different monomers. As to expression, detected in blood plasma (at protein level).

It localises to the secreted. Functionally, cleaved by the protease thrombin to yield monomers which, together with fibrinogen alpha (FGA) and fibrinogen gamma (FGG), polymerize to form an insoluble fibrin matrix. Fibrin has a major function in hemostasis as one of the primary components of blood clots. In addition, functions during the early stages of wound repair to stabilize the lesion and guide cell migration during re-epithelialization. Was originally thought to be essential for platelet aggregation, based on in vitro studies using anticoagulated blood. However subsequent studies have shown that it is not absolutely required for thrombus formation in vivo. Enhances expression of SELP in activated platelets. Maternal fibrinogen is essential for successful pregnancy. Fibrin deposition is also associated with infection, where it protects against IFNG-mediated hemorrhage. May also facilitate the antibacterial immune response via both innate and T-cell mediated pathways. This chain is Fibrinogen beta chain (FGB), found in Homo sapiens (Human).